Reading from the N-terminus, the 366-residue chain is ATP-dependent 6-phosphofructokinase (366 aa).

ATP-binding positions include G16, 78–79 (RE), and 118–121 (GNGT). The segment at 74 to 94 (LGTSREKPFKPDPGEKDSEAG) is disordered. Residues 77 to 94 (SREKPFKPDPGEKDSEAG) are compositionally biased toward basic and acidic residues. N119 is a Mg(2+) binding site. Residues 141–143 (TID), R178, 185–187 (MGH), E238, R282, and 288–291 (YLQR) contribute to the substrate site. The active-site Proton acceptor is D143.

This sequence belongs to the phosphofructokinase type A (PFKA) family. Mixed-substrate PFK group III subfamily. In terms of assembly, homodimer or homotetramer. Mg(2+) serves as cofactor.

The protein resides in the cytoplasm. The enzyme catalyses beta-D-fructose 6-phosphate + ATP = beta-D-fructose 1,6-bisphosphate + ADP + H(+). It functions in the pathway carbohydrate degradation; glycolysis; D-glyceraldehyde 3-phosphate and glycerone phosphate from D-glucose: step 3/4. Its function is as follows. Catalyzes the phosphorylation of D-fructose 6-phosphate to fructose 1,6-bisphosphate by ATP, the first committing step of glycolysis. The chain is ATP-dependent 6-phosphofructokinase from Spirochaeta thermophila (strain ATCC 49972 / DSM 6192 / RI 19.B1).